Here is a 403-residue protein sequence, read N- to C-terminus: Phosphoglycerate kinase (403 aa).

Substrate contacts are provided by residues Asp24–Asn26, Arg39, His62–Arg65, Arg121, and Arg161. ATP-binding positions include Lys211, Gly299, Glu330, and Gly359–Ser362.

Belongs to the phosphoglycerate kinase family. As to quaternary structure, monomer.

The protein resides in the cytoplasm. The enzyme catalyses (2R)-3-phosphoglycerate + ATP = (2R)-3-phospho-glyceroyl phosphate + ADP. The protein operates within carbohydrate degradation; glycolysis; pyruvate from D-glyceraldehyde 3-phosphate: step 2/5. The chain is Phosphoglycerate kinase from Rhodococcus erythropolis (strain PR4 / NBRC 100887).